The sequence spans 154 residues: 6,7-dimethyl-8-ribityllumazine synthase (154 aa).

5-amino-6-(D-ribitylamino)uracil contacts are provided by residues Phe23, 57–59 (AFE), and 81–83 (AII). 86-87 (ST) provides a ligand contact to (2S)-2-hydroxy-3-oxobutyl phosphate. Residue His89 is the Proton donor of the active site. Phe114 lines the 5-amino-6-(D-ribitylamino)uracil pocket. Arg128 is a (2S)-2-hydroxy-3-oxobutyl phosphate binding site.

The protein belongs to the DMRL synthase family.

It catalyses the reaction (2S)-2-hydroxy-3-oxobutyl phosphate + 5-amino-6-(D-ribitylamino)uracil = 6,7-dimethyl-8-(1-D-ribityl)lumazine + phosphate + 2 H2O + H(+). It functions in the pathway cofactor biosynthesis; riboflavin biosynthesis; riboflavin from 2-hydroxy-3-oxobutyl phosphate and 5-amino-6-(D-ribitylamino)uracil: step 1/2. In terms of biological role, catalyzes the formation of 6,7-dimethyl-8-ribityllumazine by condensation of 5-amino-6-(D-ribitylamino)uracil with 3,4-dihydroxy-2-butanone 4-phosphate. This is the penultimate step in the biosynthesis of riboflavin. The chain is 6,7-dimethyl-8-ribityllumazine synthase from Nitratiruptor sp. (strain SB155-2).